A 909-amino-acid polypeptide reads, in one-letter code: Short transient receptor potential channel 3 (909 aa).

The interval 1 to 92 (MSTKVKKCRE…VRGPAFMFGA (92 aa)) is disordered. The Cytoplasmic segment spans residues 1 to 447 (MSTKVKKCRE…KILRSPFMKF (447 aa)). Positions 19-28 (PEEEDGEAEG) are enriched in acidic residues. Over residues 47–57 (PPCPRAPPSPG) the composition is skewed to pro residues. A compositionally biased stretch (low complexity) spans 58 to 67 (PDASSEGSPS). ANK repeat units lie at residues 99 to 128 (AEEE…TLNV), 134 to 163 (MGQN…LARI), 165 to 191 (DALL…FAAS), and 220 to 249 (PDIT…RIER). Ca(2+) is bound at residue glutamate 146. The chain crosses the membrane as a helical span at residues 448–465 (VAHAASFIIFLGLLVFNA). At 466–496 (SDRFEGITTLPNITVIDYPKQIFRVKTTQFT) the chain is on the extracellular side. An N-linked (GlcNAc...) asparagine glycan is attached at asparagine 477. The helical transmembrane segment at 497 to 515 (WTEMLIMVWVLGMMWSECK) threads the bilayer. Ca(2+)-binding residues include glutamate 513, glutamate 516, and asparagine 531. Topologically, residues 516 to 528 (ELWLEGPREYIVQ) are cytoplasmic. Residues 529 to 550 (LWNVLDFGMLSIFIAAFTARFL) form a helical membrane-spanning segment. Topologically, residues 551 to 594 (AFLQATKAQQYVDSHVQESDLSEVTLPPEVQYFTYARDKWLPSD) are extracellular. A helical transmembrane segment spans residues 595 to 618 (PQIISEGLYAIAVVLSFSRIAYIL). The Cytoplasmic segment spans residues 619–637 (PANESFGPLQISLGRTVKD). The ANK 5 repeat unit spans residues 622–651 (ESFGPLQISLGRTVKDIFKFMVLFIMVFLA). Residues 638–661 (IFKFMVLFIMVFLAFMIGMFILYS) form a helical membrane-spanning segment. At 662–701 (YYLGAKVNPAFTTVEESFKTLFWSIFGLSEVTSVVLKYDH) the chain is on the extracellular side. A helical membrane pass occupies residues 702 to 727 (KFIENIGYVLYGIYNVTMVVVLLNML). At 728–909 (IAMINSSYQE…KLNPSALRCE (182 aa)) the chain is on the cytoplasmic side. Ca(2+)-binding residues include glutamate 859, glutamate 862, glutamate 864, and aspartate 871.

It belongs to the transient receptor (TC 1.A.4) family. STrpC subfamily. TRPC3 sub-subfamily. In terms of assembly, homotetramer. Interacts with ITPR1, ITPR3, MX1 and RNF24. Interacts with JPH2; the interaction is involved in maintaining Ca(2+) homeostasis in skeletal muscle and is mediated by JPH2 'Ser-165' phosphorylation.

The protein resides in the cell membrane. It carries out the reaction Ca(2+)(in) = Ca(2+)(out). Its activity is regulated as follows. Activated by diacylglycerol (DAG) in a membrane-delimited fashion, independently of protein kinase C. Activated by inositol 1,4,5-triphosphate receptors (ITPR) with bound IP3. May be activated by internal calcium store depletion. Inhibited by intracellular Ca(2+). Functionally, forms a receptor-activated non-selective calcium permeant cation channel. May be operated by a phosphatidylinositol second messenger system activated by receptor tyrosine kinases or G-protein coupled receptors. This is Short transient receptor potential channel 3 (Trpc3) from Rattus norvegicus (Rat).